The following is a 305-amino-acid chain: Ribonuclease BN (305 aa).

Positions 64, 66, 68, 69, 141, 212, and 270 each coordinate Zn(2+). Residue Asp-68 is the Proton acceptor of the active site.

This sequence belongs to the RNase Z family. RNase BN subfamily. Homodimer. Zn(2+) serves as cofactor.

Zinc phosphodiesterase, which has both exoribonuclease and endoribonuclease activities. The sequence is that of Ribonuclease BN from Salmonella paratyphi C (strain RKS4594).